Consider the following 87-residue polypeptide: U14-lycotoxin-Ls1a (87 aa).

The N-terminal stretch at Met1 to Ser20 is a signal peptide. The WAP domain maps to Glu21–Ser66. Cystine bridges form between Cys24-Cys54, Cys32-Cys58, Cys41-Cys53, Cys42-Cys80, and Cys47-Cys62.

It belongs to the venom protein 11 family. 01 (wap-1) subfamily. Post-translationally, contains 5 disulfide bonds. As to expression, expressed by the venom gland.

It is found in the secreted. Its function is as follows. Has antibacterial activity. This chain is U14-lycotoxin-Ls1a, found in Lycosa singoriensis (Wolf spider).